Reading from the N-terminus, the 247-residue chain is E3 SUMO-protein ligase NSE2 (247 aa).

An N-acetylmethionine modification is found at Met-1. Glycyl lysine isopeptide (Lys-Gly) (interchain with G-Cter in SUMO2) cross-links involve residues Lys-90 and Lys-107. Ser-116 carries the phosphoserine modification. Residues Lys-125 and Lys-130 each participate in a glycyl lysine isopeptide (Lys-Gly) (interchain with G-Cter in SUMO2) cross-link. Residues 154–240 form an SP-RING-type zinc finger; that stretch reads MDEDMIVTQS…LRRAIESHNK (87 aa). Residues Cys-185, His-187, Cys-210, and Cys-215 each coordinate Zn(2+).

Belongs to the NSE2 family. As to quaternary structure, component of the SMC5-SMC6 complex which consists at least of SMC5, SMC6, NSMCE2, NSMCE1, NSMCE4A or EID3 and NSMCE3. In terms of processing, sumoylated, possibly via autosumoylation.

It localises to the nucleus. It is found in the chromosome. The protein resides in the telomere. The protein localises to the PML body. The protein operates within protein modification; protein sumoylation. In terms of biological role, E3 SUMO-protein ligase component of the SMC5-SMC6 complex, a complex involved in DNA double-strand break repair by homologous recombination. Is not be required for the stability of the complex. The complex may promote sister chromatid homologous recombination by recruiting the SMC1-SMC3 cohesin complex to double-strand breaks. Acts as an E3 ligase mediating SUMO attachment to various proteins such as SMC6L1 and TSNAX, the shelterin complex subunits TERF1, TERF2, TINF2 and TERF2IP, RAD51AP1, and maybe the cohesin components RAD21 and STAG2. Required for recruitment of telomeres to PML nuclear bodies. Required for sister chromatid cohesion during prometaphase and mitotic progression. The polypeptide is E3 SUMO-protein ligase NSE2 (Nsmce2) (Rattus norvegicus (Rat)).